We begin with the raw amino-acid sequence, 146 residues long: Ribosome maturation factor RimP (146 aa).

This sequence belongs to the RimP family.

It is found in the cytoplasm. Required for maturation of 30S ribosomal subunits. The chain is Ribosome maturation factor RimP from Helicobacter pylori (strain P12).